The primary structure comprises 502 residues: Lysine--tRNA ligase (502 aa).

Mg(2+) is bound by residues Glu-398 and Glu-405.

Belongs to the class-II aminoacyl-tRNA synthetase family. As to quaternary structure, homodimer. Requires Mg(2+) as cofactor.

Its subcellular location is the cytoplasm. The catalysed reaction is tRNA(Lys) + L-lysine + ATP = L-lysyl-tRNA(Lys) + AMP + diphosphate. This is Lysine--tRNA ligase (lysS) from Thermotoga maritima (strain ATCC 43589 / DSM 3109 / JCM 10099 / NBRC 100826 / MSB8).